Reading from the N-terminus, the 179-residue chain is Cytochrome b6-f complex iron-sulfur subunit (179 aa).

Residues 21 to 43 (LLTFGSATGVALGMLYPVVRYFI) form a helical membrane-spanning segment. The region spanning 61-162 (GNDISVSDFL…AAVSDDKITF (102 aa)) is the Rieske domain. The [2Fe-2S] cluster site is built by C108, H110, C126, and H129. C113 and C128 are oxidised to a cystine.

Belongs to the Rieske iron-sulfur protein family. The 4 large subunits of the cytochrome b6-f complex are cytochrome b6, subunit IV (17 kDa polypeptide, PetD), cytochrome f and the Rieske protein, while the 4 small subunits are PetG, PetL, PetM and PetN. The complex functions as a dimer. [2Fe-2S] cluster is required as a cofactor.

It localises to the cellular thylakoid membrane. It carries out the reaction 2 oxidized [plastocyanin] + a plastoquinol + 2 H(+)(in) = 2 reduced [plastocyanin] + a plastoquinone + 4 H(+)(out). In terms of biological role, component of the cytochrome b6-f complex, which mediates electron transfer between photosystem II (PSII) and photosystem I (PSI), cyclic electron flow around PSI, and state transitions. The polypeptide is Cytochrome b6-f complex iron-sulfur subunit (Cyanothece sp. (strain PCC 7425 / ATCC 29141)).